The primary structure comprises 501 residues: Glucans biosynthesis protein G (501 aa).

A signal peptide spans 1–24; it reads MNRRQVLAALAAIPLLPEAFPANA.

It belongs to the OpgD/OpgG family.

It localises to the periplasm. It functions in the pathway glycan metabolism; osmoregulated periplasmic glucan (OPG) biosynthesis. Functionally, involved in the biosynthesis of osmoregulated periplasmic glucans (OPGs). This chain is Glucans biosynthesis protein G, found in Rhodopseudomonas palustris (strain BisA53).